Here is a 470-residue protein sequence, read N- to C-terminus: ATP synthase subunit beta (470 aa).

ATP is bound at residue 155–162 (GGAGVGKT).

It belongs to the ATPase alpha/beta chains family. In terms of assembly, F-type ATPases have 2 components, CF(1) - the catalytic core - and CF(0) - the membrane proton channel. CF(1) has five subunits: alpha(3), beta(3), gamma(1), delta(1), epsilon(1). CF(0) has three main subunits: a(1), b(2) and c(9-12). The alpha and beta chains form an alternating ring which encloses part of the gamma chain. CF(1) is attached to CF(0) by a central stalk formed by the gamma and epsilon chains, while a peripheral stalk is formed by the delta and b chains.

Its subcellular location is the cell inner membrane. The catalysed reaction is ATP + H2O + 4 H(+)(in) = ADP + phosphate + 5 H(+)(out). Functionally, produces ATP from ADP in the presence of a proton gradient across the membrane. The catalytic sites are hosted primarily by the beta subunits. The chain is ATP synthase subunit beta from Oleidesulfovibrio alaskensis (strain ATCC BAA-1058 / DSM 17464 / G20) (Desulfovibrio alaskensis).